A 62-amino-acid polypeptide reads, in one-letter code: Sperm protamine P1 (62 aa).

Residues 1–62 (MARYRHSRSR…RYSRRRRRRY (62 aa)) are disordered.

Belongs to the protamine P1 family. Testis.

It is found in the nucleus. Its subcellular location is the chromosome. Functionally, protamines substitute for histones in the chromatin of sperm during the haploid phase of spermatogenesis. They compact sperm DNA into a highly condensed, stable and inactive complex. The chain is Sperm protamine P1 (PRM1) from Notamacropus eugenii (Tammar wallaby).